The primary structure comprises 166 residues: Plastocyanin, chloroplastic (166 aa).

The N-terminal 67 residues, 1–67, are a transit peptide targeting the chloroplast; the sequence is MASLTSAAVT…GAVLASNALA (67 aa). The Plastocyanin-like domain occupies 68–166; sequence VEVLLGGSDG…AGMAGKITVN (99 aa). Cu cation is bound by residues H104, C151, H154, and M159.

This sequence belongs to the plastocyanin family. The cofactor is Cu(2+).

The protein resides in the plastid. It localises to the chloroplast thylakoid membrane. In terms of biological role, participates in electron transfer between P700 and the cytochrome b6-f complex in photosystem I. This is Plastocyanin, chloroplastic (PETE) from Fritillaria agrestis (Stinkbells).